The chain runs to 288 residues: Keratin-associated protein 5-4 (288 aa).

Repeat copies occupy residues 49-52, 55-58, 61-64, 201-204, 220-223, 239-242, 249-252, 268-271, and 278-281. The interval 49-281 is 9 X 4 AA repeats of C-C-X-P; the sequence is CCVPICCCKP…CCSQSSCCVP (233 aa).

Belongs to the KRTAP type 5 family. In terms of assembly, interacts with hair keratins. In terms of tissue distribution, restricted to hair root, not detected in any other tissues.

In terms of biological role, in the hair cortex, hair keratin intermediate filaments are embedded in an interfilamentous matrix, consisting of hair keratin-associated protein (KRTAP), which are essential for the formation of a rigid and resistant hair shaft through their extensive disulfide bond cross-linking with abundant cysteine residues of hair keratins. The matrix proteins include the high-sulfur and high-glycine-tyrosine keratins. The protein is Keratin-associated protein 5-4 (KRTAP5-4) of Homo sapiens (Human).